The primary structure comprises 459 residues: Glutamate--tRNA ligase 2 (459 aa).

The 'HIGH' region signature appears at 8–18 (PSPTGYLHIGG). Residues 237-241 (KLSKR) carry the 'KMSKS' region motif. Lys-240 is an ATP binding site.

This sequence belongs to the class-I aminoacyl-tRNA synthetase family. Glutamate--tRNA ligase type 1 subfamily. Monomer.

The protein resides in the cytoplasm. It catalyses the reaction tRNA(Glu) + L-glutamate + ATP = L-glutamyl-tRNA(Glu) + AMP + diphosphate. Its function is as follows. Catalyzes the attachment of glutamate to tRNA(Glu) in a two-step reaction: glutamate is first activated by ATP to form Glu-AMP and then transferred to the acceptor end of tRNA(Glu). The chain is Glutamate--tRNA ligase 2 from Campylobacter concisus (strain 13826).